The chain runs to 116 residues: NADPH-dependent 7-cyano-7-deazaguanine reductase (116 aa).

Cys-31 (thioimide intermediate) is an active-site residue. The active-site Proton donor is Asp-38. Substrate-binding positions include 53–55 (VEL) and 72–73 (YE).

This sequence belongs to the GTP cyclohydrolase I family. QueF type 1 subfamily.

It localises to the cytoplasm. It carries out the reaction 7-aminomethyl-7-carbaguanine + 2 NADP(+) = 7-cyano-7-deazaguanine + 2 NADPH + 3 H(+). The protein operates within tRNA modification; tRNA-queuosine biosynthesis. Catalyzes the NADPH-dependent reduction of 7-cyano-7-deazaguanine (preQ0) to 7-aminomethyl-7-deazaguanine (preQ1). This chain is NADPH-dependent 7-cyano-7-deazaguanine reductase, found in Chlorobium phaeobacteroides (strain DSM 266 / SMG 266 / 2430).